Consider the following 538-residue polypeptide: Chaperonin GroEL (538 aa).

Residues 29 to 32 (TLGP), 86 to 90 (DGTTT), Gly-413, 477 to 479 (NAA), and Asp-493 contribute to the ATP site.

This sequence belongs to the chaperonin (HSP60) family. In terms of assembly, forms a cylinder of 14 subunits composed of two heptameric rings stacked back-to-back. Interacts with the co-chaperonin GroES.

It is found in the cytoplasm. It catalyses the reaction ATP + H2O + a folded polypeptide = ADP + phosphate + an unfolded polypeptide.. In terms of biological role, together with its co-chaperonin GroES, plays an essential role in assisting protein folding. The GroEL-GroES system forms a nano-cage that allows encapsulation of the non-native substrate proteins and provides a physical environment optimized to promote and accelerate protein folding. The polypeptide is Chaperonin GroEL (Scardovia inopinata (Bifidobacterium inopinatum)).